Reading from the N-terminus, the 195-residue chain is Glycerol-3-phosphate acyltransferase 2 (195 aa).

6 helical membrane-spanning segments follow: residues 4–24, 52–72, 73–93, 115–135, 150–170, and 171–191; these read VVSL…VAGV, GAAA…VGLA, LWLA…GVVF, AMLV…LALI, AIPF…SRLG, and GGAE…HLLA.

It belongs to the PlsY family. In terms of assembly, probably interacts with PlsX.

The protein localises to the cell membrane. It carries out the reaction an acyl phosphate + sn-glycerol 3-phosphate = a 1-acyl-sn-glycero-3-phosphate + phosphate. It functions in the pathway lipid metabolism; phospholipid metabolism. Catalyzes the transfer of an acyl group from acyl-phosphate (acyl-PO(4)) to glycerol-3-phosphate (G3P) to form lysophosphatidic acid (LPA). This enzyme utilizes acyl-phosphate as fatty acyl donor, but not acyl-CoA or acyl-ACP. The chain is Glycerol-3-phosphate acyltransferase 2 from Deinococcus radiodurans (strain ATCC 13939 / DSM 20539 / JCM 16871 / CCUG 27074 / LMG 4051 / NBRC 15346 / NCIMB 9279 / VKM B-1422 / R1).